A 285-amino-acid chain; its full sequence is Chitinase 4 (285 aa).

The N-terminal stretch at Met-1 to Ala-27 is a signal peptide. Residues Gln-28–Gly-62 enclose the Chitin-binding type-1 domain. 7 cysteine pairs are disulfide-bonded: Cys-30/Cys-38, Cys-32/Cys-44, Cys-37/Cys-51, Cys-55/Cys-60, Cys-104/Cys-153, Cys-166/Cys-175, and Cys-253/Cys-285. Glu-148 serves as the catalytic Proton donor.

The protein belongs to the glycosyl hydrolase 19 family. Chitinase class IV subfamily. As to expression, expressed at low levels in leaves, sheaths and meristems.

It carries out the reaction Random endo-hydrolysis of N-acetyl-beta-D-glucosaminide (1-&gt;4)-beta-linkages in chitin and chitodextrins.. Its function is as follows. Hydrolyzes chitin and may function in reproductive organs during embryogenesis and seed maturation. In Oryza sativa subsp. japonica (Rice), this protein is Chitinase 4 (Cht4).